The chain runs to 500 residues: Lysine--tRNA ligase (500 aa).

Positions 410 and 417 each coordinate Mg(2+).

Belongs to the class-II aminoacyl-tRNA synthetase family. Homodimer. Mg(2+) serves as cofactor.

It localises to the cytoplasm. The catalysed reaction is tRNA(Lys) + L-lysine + ATP = L-lysyl-tRNA(Lys) + AMP + diphosphate. The protein is Lysine--tRNA ligase of Pseudomonas syringae pv. syringae (strain B728a).